The following is a 564-amino-acid chain: Cysteine--tRNA ligase CPS1, chloroplastic/mitochondrial (564 aa).

The transit peptide at 1–43 (MAAAVVVRRAAGLIPLLSSRFGARMPLHRALSQIPPPRFCRLL) directs the protein to the chloroplast and mitochondrion. C93 is a Zn(2+) binding site. Positions 95 to 105 (VTPYDDSHIGH) match the 'HIGH' region motif. The Zn(2+) site is built by C273, H298, and E302. The 'KMSKS' region motif lies at 330–334 (KMSKS). Residue K333 coordinates ATP.

It belongs to the class-I aminoacyl-tRNA synthetase family. The cofactor is Zn(2+).

The protein resides in the plastid. It localises to the chloroplast. The protein localises to the mitochondrion. It catalyses the reaction tRNA(Cys) + L-cysteine + ATP = L-cysteinyl-tRNA(Cys) + AMP + diphosphate. Nuclear genome-encoded factor required for normal assembly of chloroplast polysomes. This Zea mays (Maize) protein is Cysteine--tRNA ligase CPS1, chloroplastic/mitochondrial.